Reading from the N-terminus, the 52-residue chain is Phospholamban (52 aa).

At M1 the chain carries N-acetylmethionine. Over 1–31 (MDKVQYLTRSAIRRASTIEMPQQARQNLQNL) the chain is Cytoplasmic. Phosphoserine; by PKA and DMPK is present on S16. T17 is subject to Phosphothreonine; by CaMK2. Residues 32–52 (FINFCLILICLLLICIIVMLL) traverse the membrane as a helical segment. C36 carries S-palmitoyl cysteine lipidation.

The protein belongs to the phospholamban family. Homopentamer. Can also form heterooligomers with other sarcoplasmic/endoplasmic reticulum calcium ATPase (SERCA) regulators ARLN, ERLN, SLN and STRIT1/DWORF. Monomer. Interacts with HAX1. Interacts as a monomer with ATP2A2; the interaction decreases ATP2A2 Ca(2+) affinity. Interacts with VMP1; VMP1 competes with PLN and SLN to prevent them from forming an inhibitory complex with ATP2A2. Interacts with S100A1 in a Ca(2+)-dependent manner. Phosphorylation by DMPK may stimulate sarcoplasmic reticulum calcium uptake in cardiomyocytes. Phosphorylation by PKA abolishes the inhibition of ATP2A2-mediated calcium uptake. Phosphorylated at Thr-17 by CaMK2, and in response to beta-adrenergic stimulation. Post-translationally, palmitoylated by ZDHHC16, promoting formation of the homopentamer. In terms of processing, in elongated spermatids, proteolytically cleaved by SPPL2C which modulates intracellular Ca(2+) homeostasis. Heart.

Its subcellular location is the endoplasmic reticulum membrane. It is found in the sarcoplasmic reticulum membrane. It localises to the mitochondrion membrane. The protein resides in the membrane. Reversibly inhibits the activity of ATP2A2/SERCA2 in cardiac sarcoplasmic reticulum by decreasing the apparent affinity of the ATPase for Ca(2+). Binds preferentially to the ATP-bound E1 conformational form of ATP2A2 which predominates at low Ca(2+) concentrations during the diastolic phase of the cardiac cycle. Inhibits ATP2A2 Ca(2+) affinity by disrupting its allosteric activation by ATP. Modulates the contractility of the heart muscle in response to physiological stimuli via its effects on ATP2A2. Modulates calcium re-uptake during muscle relaxation and plays an important role in calcium homeostasis in the heart muscle. The degree of ATP2A2 inhibition depends on the oligomeric state of PLN. ATP2A2 inhibition is alleviated by PLN phosphorylation. Also inhibits the activity of ATP2A3/SERCA3. Controls intracellular Ca(2+) levels in elongated spermatids and may play a role in germ cell differentiation. In the thalamic reticular nucleus of the brain, plays a role in the regulation of sleep patterns and executive functioning. This chain is Phospholamban, found in Canis lupus familiaris (Dog).